Here is a 258-residue protein sequence, read N- to C-terminus: D-beta-hydroxybutyrate dehydrogenase (258 aa).

NAD(+) is bound at residue 6-30 (VITGSTSGIGLAIARTLAKAGANIV). Position 140 (Ser140) interacts with substrate. Tyr153 functions as the Proton acceptor in the catalytic mechanism.

Belongs to the short-chain dehydrogenases/reductases (SDR) family.

It carries out the reaction (R)-3-hydroxybutanoate + NAD(+) = acetoacetate + NADH + H(+). The protein is D-beta-hydroxybutyrate dehydrogenase (bdhA) of Rhizobium meliloti (strain 1021) (Ensifer meliloti).